A 362-amino-acid chain; its full sequence is Phosphoserine aminotransferase (362 aa).

L-glutamate contacts are provided by Ser9 and Arg42. Pyridoxal 5'-phosphate contacts are provided by residues 76–77, Trp102, Thr153, Asp174, and Gln197; that span reads GR. Residue Lys198 is modified to N6-(pyridoxal phosphate)lysine. 239–240 is a binding site for pyridoxal 5'-phosphate; that stretch reads NT.

The protein belongs to the class-V pyridoxal-phosphate-dependent aminotransferase family. SerC subfamily. As to quaternary structure, homodimer. Pyridoxal 5'-phosphate is required as a cofactor.

It is found in the cytoplasm. It catalyses the reaction O-phospho-L-serine + 2-oxoglutarate = 3-phosphooxypyruvate + L-glutamate. The catalysed reaction is 4-(phosphooxy)-L-threonine + 2-oxoglutarate = (R)-3-hydroxy-2-oxo-4-phosphooxybutanoate + L-glutamate. The protein operates within amino-acid biosynthesis; L-serine biosynthesis; L-serine from 3-phospho-D-glycerate: step 2/3. It functions in the pathway cofactor biosynthesis; pyridoxine 5'-phosphate biosynthesis; pyridoxine 5'-phosphate from D-erythrose 4-phosphate: step 3/5. Its function is as follows. Catalyzes the reversible conversion of 3-phosphohydroxypyruvate to phosphoserine and of 3-hydroxy-2-oxo-4-phosphonooxybutanoate to phosphohydroxythreonine. This Escherichia coli O17:K52:H18 (strain UMN026 / ExPEC) protein is Phosphoserine aminotransferase.